Here is a 347-residue protein sequence, read N- to C-terminus: Hydroxymethylglutaryl-CoA synthase (347 aa).

(3S)-3-hydroxy-3-methylglutaryl-CoA-binding residues include Asp-29 and Ala-30. Catalysis depends on Glu-80, which acts as the Proton donor/acceptor. (3S)-3-hydroxy-3-methylglutaryl-CoA is bound by residues Cys-112 and Thr-153. The active-site Acyl-thioester intermediate is the Cys-112. Arg-199 is a CoA binding site. Positions 201 and 234 each coordinate (3S)-3-hydroxy-3-methylglutaryl-CoA. Catalysis depends on His-234, which acts as the Proton donor/acceptor. A CoA-binding site is contributed by Lys-239. (3S)-3-hydroxy-3-methylglutaryl-CoA contacts are provided by Arg-243, Asn-266, and Ser-296.

It belongs to the thiolase-like superfamily. Archaeal HMG-CoA synthase family. In terms of assembly, interacts with acetoacetyl-CoA thiolase that catalyzes the precedent step in the pathway and with a DUF35 protein. The acetoacetyl-CoA thiolase/HMG-CoA synthase complex channels the intermediate via a fused CoA-binding site, which allows for efficient coupling of the endergonic thiolase reaction with the exergonic HMGCS reaction.

It catalyses the reaction acetoacetyl-CoA + acetyl-CoA + H2O = (3S)-3-hydroxy-3-methylglutaryl-CoA + CoA + H(+). It functions in the pathway metabolic intermediate biosynthesis; (R)-mevalonate biosynthesis; (R)-mevalonate from acetyl-CoA: step 2/3. Catalyzes the condensation of acetyl-CoA with acetoacetyl-CoA to form 3-hydroxy-3-methylglutaryl-CoA (HMG-CoA). Functions in the mevalonate (MVA) pathway leading to isopentenyl diphosphate (IPP), a key precursor for the biosynthesis of isoprenoid compounds that are building blocks of archaeal membrane lipids. In Methanocella arvoryzae (strain DSM 22066 / NBRC 105507 / MRE50), this protein is Hydroxymethylglutaryl-CoA synthase.